The following is a 3601-amino-acid chain: Protein SPIRRIG (3601 aa).

7 disordered regions span residues 17-50, 398-426, 449-476, 638-657, 1954-1993, 2009-2049, and 2715-2747; these read AQSSDSDPFPVDLTAPPSSSSSSSSPSFTYPSSS, SSNHDSGSDDPEVFHDGENTNSTENADFS, PAEPSVGRASRSSQTKPTGHSRSRTSSV, QYSGVSSHSDRKPSSGSFRK, HINDADDSGSQGSLPHDQDQSTKTSISVGSFPQGQVSLGS, ENIL…DFQD, and TTHVKSETGSPRHSSSAKMDETNGREEKSEKEL. Low complexity predominate over residues 32–50; sequence PPSSSSSSSSPSFTYPSSS. 2 stretches are compositionally biased toward polar residues: residues 416 to 426 and 458 to 476; these read NTNSTENADFS and SRSSQTKPTGHSRSRTSSV. Over residues 1974–1991 the composition is skewed to polar residues; the sequence is STKTSISVGSFPQGQVSL. Positions 2027-2048 are enriched in basic and acidic residues; the sequence is EDVKKQDDHHVGPSASSERDFQ. Residues 2715-2731 show a composition bias toward polar residues; sequence TTHVKSETGSPRHSSSA. Positions 2732–2747 are enriched in basic and acidic residues; that stretch reads KMDETNGREEKSEKEL. The 168-residue stretch at 2760–2927 folds into the BEACH-type PH domain; that stretch reads EHLEKIRFRY…EREEVFKNLV (168 aa). The BEACH domain maps to 2952–3244; it reads GGRLFKLMAK…QLFPKAHVKR (293 aa). 4 WD repeats span residues 3328–3367, 3378–3417, 3464–3507, and 3540–3579; these read HESNQIQCAGVSHDGRIVVTGAEDGLVCVWRVSKDGPRGS, AHTAKVTCLRVSQPYMMIASGSDDCTVIIWDLSSLSFVRQ, PSDS…DPVS, and FHKQPVTALHLTSDLKQLLSGDSAGQLLSWTVPDETLRAS.

As to quaternary structure, interacts with DCP1. As to expression, expressed in flowers, leaves, stems, hypocotyls and roots.

It is found in the cytoplasm. Its subcellular location is the P-body. Functionally, involved in cell morphogenesis. May have a function in membrane fusion or membrane composition. Required for salt stress tolerance. Regulates the salt stress-dependent post-transcriptional stabilization, cytoplasmic agglomeration, and localization to P-bodies of a subset of salt stress-regulated mRNAs. The sequence is that of Protein SPIRRIG from Arabidopsis thaliana (Mouse-ear cress).